Consider the following 285-residue polypeptide: Complement C1q tumor necrosis factor-related protein 2 (285 aa).

A signal peptide spans 1 to 15 (MIPWVLLACALPCAA). The tract at residues 33–144 (QLVCSLPGPQ…PGLPGPCSCG (112 aa)) is disordered. Residues 40–141 (GPQGPPGPPG…KGEPGLPGPC (102 aa)) enclose the Collagen-like domain. Over residues 41-51 (PQGPPGPPGAP) the composition is skewed to pro residues. Over residues 53–65 (PSGMMGRMGFPGK) the composition is skewed to low complexity. Positions 66–78 (DGQDGHDGDRGDS) are enriched in basic and acidic residues. The span at 84-120 (PGRTGNRGKPGPKGKAGAIGRAGPRGPKGVNGTPGKH) shows a compositional bias: low complexity. In terms of domain architecture, C1q spans 145-281 (SGHTKSAFSV…GFLIYADQDD (137 aa)).

May interact with ERFE. Expressed in adipose tissue.

It localises to the secreted. Its function is as follows. Involved in the regulation of lipid metabolism in adipose tissue and liver. The polypeptide is Complement C1q tumor necrosis factor-related protein 2 (C1QTNF2) (Homo sapiens (Human)).